A 345-amino-acid chain; its full sequence is Sulfate/thiosulfate import ATP-binding protein CysA (345 aa).

Residues 3 to 237 enclose the ABC transporter domain; sequence IQVSGLCKHF…PRTEFVYQFV (235 aa). Position 35-42 (35-42) interacts with ATP; it reads GPSGCGKT.

The protein belongs to the ABC transporter superfamily. Sulfate/tungstate importer (TC 3.A.1.6) family. In terms of assembly, the complex is composed of two ATP-binding proteins (CysA), two transmembrane proteins (CysT and CysW) and a solute-binding protein (CysP).

Its subcellular location is the cell inner membrane. The catalysed reaction is sulfate(out) + ATP + H2O = sulfate(in) + ADP + phosphate + H(+). It catalyses the reaction thiosulfate(out) + ATP + H2O = thiosulfate(in) + ADP + phosphate + H(+). Functionally, part of the ABC transporter complex CysAWTP involved in sulfate/thiosulfate import. Responsible for energy coupling to the transport system. In Vibrio vulnificus (strain CMCP6), this protein is Sulfate/thiosulfate import ATP-binding protein CysA.